The sequence spans 219 residues: UPF0502 protein Gmet_0262 (219 aa).

Belongs to the UPF0502 family.

In Geobacter metallireducens (strain ATCC 53774 / DSM 7210 / GS-15), this protein is UPF0502 protein Gmet_0262.